The following is a 58-amino-acid chain: MHSSVFILILFSLAVINPIFFDMKVEAGCMKEYCAGQCRGKVSQDYCLKHCKCIPRFI.

The N-terminal stretch at 1 to 16 is a signal peptide; it reads MHSSVFILILFSLAVI. Disulfide bonds link Cys-29-Cys-51, Cys-34-Cys-47, and Cys-38-Cys-53.

In terms of tissue distribution, expressed by the venom gland.

Its subcellular location is the secreted. Its function is as follows. Blocks potassium channels. The protein is Potassium channel toxin Ts16 of Tityus serrulatus (Brazilian scorpion).